A 35-amino-acid chain; its full sequence is MEALVYTFLLVSTLGIIFFAIFFREPPKVPTKKLK.

A helical membrane pass occupies residues 3-23 (ALVYTFLLVSTLGIIFFAIFF).

Belongs to the PsbT family. In terms of assembly, PSII is composed of 1 copy each of membrane proteins PsbA, PsbB, PsbC, PsbD, PsbE, PsbF, PsbH, PsbI, PsbJ, PsbK, PsbL, PsbM, PsbT, PsbY, PsbZ, Psb30/Ycf12, at least 3 peripheral proteins of the oxygen-evolving complex and a large number of cofactors. It forms dimeric complexes.

Its subcellular location is the plastid. It localises to the chloroplast thylakoid membrane. Functionally, found at the monomer-monomer interface of the photosystem II (PS II) dimer, plays a role in assembly and dimerization of PSII. PSII is a light-driven water plastoquinone oxidoreductase, using light energy to abstract electrons from H(2)O, generating a proton gradient subsequently used for ATP formation. This Ceratophyllum demersum (Rigid hornwort) protein is Photosystem II reaction center protein T.